The chain runs to 1204 residues: Probable cation-transporting ATPase 13A4 (1204 aa).

Over 1-32 the chain is Cytoplasmic; sequence MGENPAKSHYAQLNLGEENEMEIFGYKTQCCR. A helical membrane pass occupies residues 33 to 53; that stretch reads KALCIAGYILSCGALLLLFYW. Topologically, residues 54-219 are extracellular; it reads KPEWDVWANC…FSVCLWFAED (166 aa). Residues 220 to 242 form a helical membrane-spanning segment; sequence YMEYAAAIIIMSPLSISLTVYDL. Over 243–397 the chain is Cytoplasmic; it reads RQQSVKLQRL…NFRLYRDALR (155 aa). The chain crosses the membrane as a helical span at residues 398 to 418; it reads FLMCLIAFAAIGMIYTVCVFA. Residues 419 to 433 lie on the Extracellular side of the membrane; that stretch reads LNGEEAGEVVKKALD. A helical membrane pass occupies residues 434-454; the sequence is VITIAVPPALPAALTTGIIYT. The Cytoplasmic portion of the chain corresponds to 455 to 897; sequence QRRLKKKGIF…REGRAALVTS (443 aa). D483 functions as the 4-aspartylphosphate intermediate in the catalytic mechanism. Residues D845 and D849 each coordinate Mg(2+). A helical membrane pass occupies residues 898 to 918; that stretch reads FCMFKYMALYSTIQYLGVLLL. The Extracellular segment spans residues 919-929; that stretch reads YWQLNSFGNYQ. The chain crosses the membrane as a helical span at residues 930-950; sequence FLFQDLAITTVIGMTMSFTEA. Topologically, residues 951 to 967 are cytoplasmic; it reads YPKLVPYRPPSQLVSPP. The chain crosses the membrane as a helical span at residues 968 to 988; it reads LLLSVILNILFSLGMQILGFL. At 989–1043 the chain is on the extracellular side; it reads MVQKQPWYSKTDIHSACLSVNNHVENSSSASSLGLHGVGGGDPTEVDNGYKSYEN. Residues 1044–1064 traverse the membrane as a helical segment; sequence TTVWLLSTINCLIIALVFSKG. Over 1065–1075 the chain is Cytoplasmic; sequence KPFRQPIYTNY. Residues 1076 to 1096 traverse the membrane as a helical segment; that stretch reads VFIMVLVGQLGVCLFLVFADI. The Extracellular portion of the chain corresponds to 1097–1113; sequence DDLYSKMDLVCTPTTWR. A helical transmembrane segment spans residues 1114–1134; sequence ISMVMMLAVTLAVSFLVEEAI. Topologically, residues 1135–1204 are cytoplasmic; that stretch reads IENRALWLWL…PTFDSNEDAL (70 aa).

The protein belongs to the cation transport ATPase (P-type) (TC 3.A.3) family. Type V subfamily.

Its subcellular location is the membrane. The enzyme catalyses ATP + H2O = ADP + phosphate + H(+). The polypeptide is Probable cation-transporting ATPase 13A4 (ATP13A4) (Gallus gallus (Chicken)).